The sequence spans 905 residues: Methionine--tRNA ligase, cytoplasmic (905 aa).

The region spanning 1 to 75 is the GST N-terminal domain; sequence MKLFVGEGNP…YFYLSSGHDM (75 aa). The GST C-terminal domain maps to 72–199; sequence GHDMCDLSNQ…DKGSSVFKPF (128 aa). The 'HIGH' region signature appears at 271–281; the sequence is PYVNNVPHLGN. Positions 591 to 595 match the 'KMSKS' region motif; the sequence is KFSKS. Residue K594 coordinates ATP. Disordered regions lie at residues 813 to 874 and 886 to 905; these read RFGG…VIDP and LALAEGKSPDPPTQKGKKKK. The segment covering 841–874 has biased composition (basic and acidic residues); sequence GPERVKELMQELEKQGNHVRELKGKKAEKSVIDP. In terms of domain architecture, WHEP-TRS spans 844–900; it reads RVKELMQELEKQGNHVRELKGKKAEKSVIDPEVQKLLALKKELALAEGKSPDPPTQK.

This sequence belongs to the class-I aminoacyl-tRNA synthetase family. In terms of assembly, monomer. Part of a multisubunit complex that groups tRNA ligases for Arg (RARS1), Asp (DARS1), Gln (QARS1), Ile (IARS1), Leu (LARS1), Lys (KARS1), Met (MARS1) the bifunctional ligase for Glu and Pro (EPRS1) and the auxiliary subunits AIMP1/p43, AIMP2/p38 and EEF1E1/p18.

The protein localises to the cytoplasm. It localises to the cytosol. The protein resides in the nucleus. It is found in the nucleolus. It carries out the reaction tRNA(Met) + L-methionine + ATP = L-methionyl-tRNA(Met) + AMP + diphosphate. Catalyzes the specific attachment of an amino acid to its cognate tRNA in a 2 step reaction: the amino acid (AA) is first activated by ATP to form AA-AMP and then transferred to the acceptor end of the tRNA. Plays a role in the synthesis of ribosomal RNA in the nucleolus. The protein is Methionine--tRNA ligase, cytoplasmic (mars1) of Xenopus laevis (African clawed frog).